Here is a 108-residue protein sequence, read N- to C-terminus: Protein YcgL (108 aa).

One can recognise a YcgL domain in the interval 12 to 96 (MFCVIYRSSK…PPEDLLKQHL (85 aa)).

The polypeptide is Protein YcgL (Escherichia coli O9:H4 (strain HS)).